The sequence spans 115 residues: MVSTPQFLVFLLFWIPASRGDILLTQSPAILSVSPGERVSFSCRASQSIGTSIHWYQQRTNGSPRLLIKYASESISGIPSRFSGSGSGTDFTLSINSVESEDIADYYCQQSNSWP.

The first 20 residues, 1-20 (MVSTPQFLVFLLFWIPASRG), serve as a signal peptide directing secretion. The framework-1 stretch occupies residues 21 to 43 (DILLTQSPAILSVSPGERVSFSC). A disulfide bridge links Cys-43 with Cys-108. Positions 44-54 (RASQSIGTSIH) are complementarity-determining-1. The framework-2 stretch occupies residues 55–69 (WYQQRTNGSPRLLIK). A complementarity-determining-2 region spans residues 70–76 (YASESIS). Residues 77–108 (GIPSRFSGSGSGTDFTLSINSVESEDIADYYC) are framework-3. Positions 109–115 (QQSNSWP) are complementarity-determining-3.

The polypeptide is Immunoglobulin kappa variable 5-48 (Mus musculus (Mouse)).